Reading from the N-terminus, the 694-residue chain is Polyphosphate kinase (694 aa).

Asparagine 45 is a binding site for ATP. The Mg(2+) site is built by arginine 367 and arginine 397. Catalysis depends on histidine 427, which acts as the Phosphohistidine intermediate. The ATP site is built by tyrosine 460, arginine 553, and histidine 580.

Belongs to the polyphosphate kinase 1 (PPK1) family. Mg(2+) is required as a cofactor. An intermediate of this reaction is the autophosphorylated ppk in which a phosphate is covalently linked to a histidine residue through a N-P bond.

The enzyme catalyses [phosphate](n) + ATP = [phosphate](n+1) + ADP. Its function is as follows. Catalyzes the reversible transfer of the terminal phosphate of ATP to form a long-chain polyphosphate (polyP). The protein is Polyphosphate kinase of Campylobacter jejuni subsp. jejuni serotype O:6 (strain 81116 / NCTC 11828).